The chain runs to 2202 residues: Nonribosomal peptide synthetase 5 (2202 aa).

The segment at 58–443 (TYAQLDALSD…LLSYDKVDSA (386 aa)) is adenylation 1. The 77-residue stretch at 517 to 593 (ERGLGAVESV…NIAAAVVELS (77 aa)) folds into the Carrier 1 domain. The residue at position 554 (S554) is an O-(pantetheine 4'-phosphoryl)serine. A condensation 1 region spans residues 625 to 918 (IAPMTDMQTR…INTLPLAINT (294 aa)). The tract at residues 1105–1482 (TYREFGRMTE…EVQSTISKLA (378 aa)) is adenylation 2. In terms of domain architecture, Carrier 2 spans 1563-1643 (DLETDTQRVL…DLSLAIDELV (81 aa)). S1602 bears the O-(pantetheine 4'-phosphoryl)serine mark. The tract at residues 1664-1952 (GQLPLSYLEK…FLDRLLLRIQ (289 aa)) is condensation 2. Residues 2103–2129 (PVGLTPSHEGSAELTNGTNKTDSTTGQ) form a disordered region. The segment covering 2115–2129 (ELTNGTNKTDSTTGQ) has biased composition (polar residues). The region spanning 2130 to 2202 (QELENNLTDV…LELATCAVII (73 aa)) is the Carrier 3 domain. Residue S2164 is modified to O-(pantetheine 4'-phosphoryl)serine.

Belongs to the NRP synthetase family.

In terms of biological role, nonribosomal peptide synthesis (NRPS) is a key mechanism responsible for the biosynthesis of bioactive metabolites which are potentially contributing to organismal virulence. The protein is Nonribosomal peptide synthetase 5 (NRPS5) of Aspergillus fumigatus (strain ATCC MYA-4609 / CBS 101355 / FGSC A1100 / Af293) (Neosartorya fumigata).